Reading from the N-terminus, the 193-residue chain is Peptidyl-tRNA hydrolase (193 aa).

TRNA is bound at residue Tyr-16. The Proton acceptor role is filled by His-21. The tRNA site is built by Tyr-66, Asn-68, and Asn-114.

Belongs to the PTH family. In terms of assembly, monomer.

Its subcellular location is the cytoplasm. The enzyme catalyses an N-acyl-L-alpha-aminoacyl-tRNA + H2O = an N-acyl-L-amino acid + a tRNA + H(+). Functionally, hydrolyzes ribosome-free peptidyl-tRNAs (with 1 or more amino acids incorporated), which drop off the ribosome during protein synthesis, or as a result of ribosome stalling. Its function is as follows. Catalyzes the release of premature peptidyl moieties from peptidyl-tRNA molecules trapped in stalled 50S ribosomal subunits, and thus maintains levels of free tRNAs and 50S ribosomes. The sequence is that of Peptidyl-tRNA hydrolase from Geobacter sulfurreducens (strain ATCC 51573 / DSM 12127 / PCA).